The primary structure comprises 126 residues: Small ribosomal subunit protein uS12c (126 aa).

This sequence belongs to the universal ribosomal protein uS12 family. As to quaternary structure, part of the 30S ribosomal subunit.

It localises to the plastid. The protein resides in the chloroplast. Functionally, with S4 and S5 plays an important role in translational accuracy. Located at the interface of the 30S and 50S subunits. This Trieres chinensis (Marine centric diatom) protein is Small ribosomal subunit protein uS12c (rps12).